Reading from the N-terminus, the 284-residue chain is Nitrogenase iron protein 1 (284 aa).

ATP is bound at residue 17 to 24 (GKGGIGKS). C105 contacts [4Fe-4S] cluster. Residue R108 is modified to ADP-ribosylarginine; by dinitrogenase reductase ADP-ribosyltransferase. C140 contacts [4Fe-4S] cluster.

The protein belongs to the NifH/BchL/ChlL family. In terms of assembly, homodimer. Requires [4Fe-4S] cluster as cofactor. In terms of processing, the reversible ADP-ribosylation of Arg-108 inactivates the nitrogenase reductase and regulates nitrogenase activity.

It carries out the reaction N2 + 8 reduced [2Fe-2S]-[ferredoxin] + 16 ATP + 16 H2O = H2 + 8 oxidized [2Fe-2S]-[ferredoxin] + 2 NH4(+) + 16 ADP + 16 phosphate + 6 H(+). In terms of biological role, the key enzymatic reactions in nitrogen fixation are catalyzed by the nitrogenase complex, which has 2 components: the iron protein and the molybdenum-iron protein. This Methanothermococcus thermolithotrophicus (Methanococcus thermolithotrophicus) protein is Nitrogenase iron protein 1 (nifH1).